The chain runs to 130 residues: Small ribosomal subunit protein uS9 (130 aa).

Residues 98-130 (LKRAGLLTRDPRMKERKKPGLKKARRSPQFSKR) are disordered. The segment covering 111–130 (KERKKPGLKKARRSPQFSKR) has biased composition (basic residues).

The protein belongs to the universal ribosomal protein uS9 family.

In Staphylococcus saprophyticus subsp. saprophyticus (strain ATCC 15305 / DSM 20229 / NCIMB 8711 / NCTC 7292 / S-41), this protein is Small ribosomal subunit protein uS9.